Here is a 336-residue protein sequence, read N- to C-terminus: 4-hydroxy-3-methylbut-2-enyl diphosphate reductase (336 aa).

Position 21 (Cys21) interacts with [4Fe-4S] cluster. 2 residues coordinate (2E)-4-hydroxy-3-methylbut-2-enyl diphosphate: His50 and His86. Dimethylallyl diphosphate-binding residues include His50 and His86. The isopentenyl diphosphate site is built by His50 and His86. [4Fe-4S] cluster is bound at residue Cys108. Position 136 (His136) interacts with (2E)-4-hydroxy-3-methylbut-2-enyl diphosphate. Residue His136 coordinates dimethylallyl diphosphate. His136 contacts isopentenyl diphosphate. The Proton donor role is filled by Glu138. Thr177 contacts (2E)-4-hydroxy-3-methylbut-2-enyl diphosphate. Cys207 is a binding site for [4Fe-4S] cluster. (2E)-4-hydroxy-3-methylbut-2-enyl diphosphate-binding residues include Ser235, Ser236, Asn237, and Ser280. Residues Ser235, Ser236, Asn237, and Ser280 each coordinate dimethylallyl diphosphate. Ser235, Ser236, Asn237, and Ser280 together coordinate isopentenyl diphosphate.

Belongs to the IspH family. Requires [4Fe-4S] cluster as cofactor.

It catalyses the reaction isopentenyl diphosphate + 2 oxidized [2Fe-2S]-[ferredoxin] + H2O = (2E)-4-hydroxy-3-methylbut-2-enyl diphosphate + 2 reduced [2Fe-2S]-[ferredoxin] + 2 H(+). The enzyme catalyses dimethylallyl diphosphate + 2 oxidized [2Fe-2S]-[ferredoxin] + H2O = (2E)-4-hydroxy-3-methylbut-2-enyl diphosphate + 2 reduced [2Fe-2S]-[ferredoxin] + 2 H(+). The protein operates within isoprenoid biosynthesis; dimethylallyl diphosphate biosynthesis; dimethylallyl diphosphate from (2E)-4-hydroxy-3-methylbutenyl diphosphate: step 1/1. It functions in the pathway isoprenoid biosynthesis; isopentenyl diphosphate biosynthesis via DXP pathway; isopentenyl diphosphate from 1-deoxy-D-xylulose 5-phosphate: step 6/6. Functionally, catalyzes the conversion of 1-hydroxy-2-methyl-2-(E)-butenyl 4-diphosphate (HMBPP) into a mixture of isopentenyl diphosphate (IPP) and dimethylallyl diphosphate (DMAPP). Acts in the terminal step of the DOXP/MEP pathway for isoprenoid precursor biosynthesis. In Mesorhizobium japonicum (strain LMG 29417 / CECT 9101 / MAFF 303099) (Mesorhizobium loti (strain MAFF 303099)), this protein is 4-hydroxy-3-methylbut-2-enyl diphosphate reductase.